We begin with the raw amino-acid sequence, 466 residues long: Collagenase 3 (466 aa).

The signal sequence occupies residues 1 to 13 (ATFFLLSWTHCWS). Positions 14–98 (LPLPYGDDDD…PRCGVPDVGV (85 aa)) are cleaved as a propeptide — activation peptide. The short motif at 89-96 (PRCGVPDV) is the Cysteine switch element. Cys-91 contacts Zn(2+). An N-linked (GlcNAc...) asparagine glycan is attached at Asn-112. Ca(2+) is bound at residue Asp-123. An N-linked (GlcNAc...) asparagine glycan is attached at Asn-147. Asp-157 contributes to the Ca(2+) binding site. His-167 and Asp-169 together coordinate Zn(2+). Positions 171–241 (YPFDGPSGLL…GALMFPIYTY (71 aa)) are interaction with TIMP2. 4 residues coordinate Ca(2+): Asp-174, Gly-175, Ser-177, and Leu-179. His-182 is a binding site for Zn(2+). Ca(2+) is bound by residues Asn-189, Gly-191, and Asp-193. Residue His-195 participates in Zn(2+) binding. Ca(2+) is bound by residues Asp-197, Asp-198, and Glu-200. Position 217 (His-217) interacts with Zn(2+). The active site involves Glu-218. 3 residues coordinate Zn(2+): His-221, His-227, and Met-235. Positions 258-279 (QSLYGPGDEDPNPKHPKTPEKC) are disordered. Residues 263–466 (PGDEDPNPKH…VMPTNSLLWC (204 aa)) are interaction with collagen. Basic and acidic residues predominate over residues 268–279 (PNPKHPKTPEKC). Hemopexin repeat units follow at residues 276–325 (PEKC…WPEL), 326–372 (PNHV…GFPK), 374–422 (VKRL…FPGI), and 423–466 (GDKV…LLWC). Cys-279 and Cys-466 form a disulfide bridge. Asp-286, Ile-288, Asp-330, and Ala-332 together coordinate Ca(2+). Phosphotyrosine; by PKDCC is present on Tyr-361. 2 residues coordinate Ca(2+): Ser-378 and Ala-380. N-linked (GlcNAc...) asparagine glycosylation is present at Asn-404. Positions 427 and 429 each coordinate Ca(2+).

It belongs to the peptidase M10A family. Ca(2+) serves as cofactor. The cofactor is Zn(2+). In terms of processing, the proenzyme is activated by removal of the propeptide; this cleavage can be effected by other matrix metalloproteinases, such as MMP2, MMP3 and MMP14 and may involve several cleavage steps. Cleavage can also be autocatalytic, after partial maturation by another protease or after treatment with 4-aminophenylmercuric acetate (APMA) (in vitro). Post-translationally, N-glycosylated. Tyrosine phosphorylated by PKDCC/VLK.

The protein resides in the secreted. Its subcellular location is the extracellular space. It is found in the extracellular matrix. Functionally, plays a role in the degradation of extracellular matrix proteins including fibrillar collagen, fibronectin, TNC and ACAN. Cleaves triple helical collagens, including type I, type II and type III collagen, but has the highest activity with soluble type II collagen. Can also degrade collagen type IV, type XIV and type X. May also function by activating or degrading key regulatory proteins, such as TGFB1 and CCN2. Plays a role in wound healing, tissue remodeling, cartilage degradation, bone development, bone mineralization and ossification. Required for normal embryonic bone development and ossification. Plays a role in the healing of bone fractures via endochondral ossification. Plays a role in wound healing, probably by a mechanism that involves proteolytic activation of TGFB1 and degradation of CCN2. Plays a role in keratinocyte migration during wound healing. May play a role in cell migration and in tumor cell invasion. This chain is Collagenase 3 (Mmp13), found in Rattus norvegicus (Rat).